The sequence spans 266 residues: Indole-3-glycerol phosphate synthase (266 aa).

The protein belongs to the TrpC family.

The catalysed reaction is 1-(2-carboxyphenylamino)-1-deoxy-D-ribulose 5-phosphate + H(+) = (1S,2R)-1-C-(indol-3-yl)glycerol 3-phosphate + CO2 + H2O. The protein operates within amino-acid biosynthesis; L-tryptophan biosynthesis; L-tryptophan from chorismate: step 4/5. This chain is Indole-3-glycerol phosphate synthase, found in Herminiimonas arsenicoxydans.